The following is a 399-amino-acid chain: MAHITINQYLQQVYEAIDTRDGASCAELVSFKHPHVANPRLQMASPEEKCQQVLEPPYDEMFAAHLRCTYAVGNHDFIEAYKCQTVIVQSFLRAFQAHKEENWALPVMYAVALDLRIFANNADQQLVKKGKSKVGDMLEKAAELLMSCFRVCASDTRAGIEDSKKWGMLFLVNQLFKIYFKINKLHLCKPLIRAIDSSNLKDDYSTAQRITYKYYVGRKAMFDSDFKQAEEYLSFAFEHCHRSSQKNKRMILIYLLPVKMLLGHMPTIELLRKYHLMQFSEVTKAVSEGNLLLLNEALAKHETFFIRCGIFLILEKLKIITYRNLFKKVYLLLKTHQLSLDAFLVALKFMHVEDVDIDEVQCILANLIYMGHIKGYISHQHQKLVVSKQNPFPPLSTVC.

N-acetylalanine is present on alanine 2. Serine 45 is modified (phosphoserine). In terms of domain architecture, PCI spans 210–391 (ITYKYYVGRK…QKLVVSKQNP (182 aa)).

This sequence belongs to the CSN12 family. Component of the nuclear pore complex (NPC)-associated TREX-2 complex (transcription and export complex 2), composed of at least GANP, 2 copies of ENY2, PCID2, SEM1/DSS1, and either centrin CETN2 or centrin CETN3. The TREX-2 complex also associates with ALYREF/ALY and with the nucleoporin NUP153. Interacts with BRCA2. Interacts with SRCAP chromatin remodeling complex component ZNHIT1; the interaction results in inhibition of SRCAP complex activity, preventing the deposition of histone variant H2AZ1/H2A.Z to lymphoid fate regulator genes and restricting lymphoid lineage commitment. As to expression, highly expressed in bone marrow and haematopoietic progenitor cells but is almost undetectable in mature blood cells.

Its subcellular location is the cytoplasm. The protein resides in the nucleus. The protein localises to the nuclear pore complex. Required for B-cell survival through the regulation of the expression of cell-cycle checkpoint MAD2L1 protein during B cell differentiation. As a component of the TREX-2 complex, involved in the export of mRNAs to the cytoplasm through the nuclear pores. Binds and stabilizes BRCA2 and is thus involved in the control of R-loop-associated DNA damage and transcription-associated genomic instability. Blocks the activity of the SRCAP chromatin remodeling complex by interacting with SRCAP complex member ZNHIT1 and inhibiting its interaction with the complex. This prevents the deposition of histone variant H2AZ1/H2A.Z at the nucleosomes of key lymphoid fate regulator genes which suppresses their expression and restricts lymphoid lineage commitment. This chain is PCI domain-containing protein 2 (Pcid2), found in Mus musculus (Mouse).